Consider the following 406-residue polypeptide: GTPase Obg (406 aa).

The 159-residue stretch at 1–159 (MRFVDEAVIT…REIRLELKVL (159 aa)) folds into the Obg domain. Positions 120 to 143 (GGEGGLGNTHFKSSTNRAPRKCTT) are disordered. Residues 160–333 (ADVGLLGMPN…VVYYLMDQIE (174 aa)) form the OBG-type G domain. Residues 166–173 (GMPNAGKS), 191–195 (FTTMV), 213–216 (DIPG), 283–286 (NKLD), and 314–316 (SGL) each bind GTP. Mg(2+)-binding residues include serine 173 and threonine 193. Residues 381–406 (ESMMDDDDDFDDDEDDGDVESIYVRD) are disordered. The span at 383 to 399 (MMDDDDDFDDDEDDGDV) shows a compositional bias: acidic residues.

The protein belongs to the TRAFAC class OBG-HflX-like GTPase superfamily. OBG GTPase family. Monomer. It depends on Mg(2+) as a cofactor.

It is found in the cytoplasm. An essential GTPase which binds GTP, GDP and possibly (p)ppGpp with moderate affinity, with high nucleotide exchange rates and a fairly low GTP hydrolysis rate. Plays a role in control of the cell cycle, stress response, ribosome biogenesis and in those bacteria that undergo differentiation, in morphogenesis control. This is GTPase Obg from Acinetobacter baumannii (strain ACICU).